The chain runs to 803 residues: Volume-regulated anion channel subunit LRRC8B (803 aa).

Residues 1 to 25 (MITLTELKCLADAQSSYHILKPWWD) are Cytoplasmic-facing. The helical transmembrane segment at 26–46 (VFWYYITLIMLLVAVLAGALQ) threads the bilayer. The Extracellular segment spans residues 47–119 (LTQSRVLCCL…YEKQLHWFAK (73 aa)). Cystine bridges form between Cys55–Cys304 and Cys109–Cys289. Residue Asn78 is glycosylated (N-linked (GlcNAc...) asparagine). Residues 120 to 140 (FFPYLVLLHTLIFAACSNFWL) traverse the membrane as a helical segment. Residues 141–261 (HYPSTSSRLE…DIIYRVYLKQ (121 aa)) are Cytoplasmic-facing. A phosphoserine mark is found at Ser186 and Ser196. Residues 262 to 282 (IIVKVILFVLIITYVPYFLTH) form a helical membrane-spanning segment. The Extracellular segment spans residues 283–307 (ITLEIDCSVDVQAFTGYKRYQCVYS). A helical membrane pass occupies residues 308-328 (LAEIFKVLASFYVILVILYGL). At 329-803 (TSSYSLWWML…ERLQTCLDKC (475 aa)) the chain is on the cytoplasmic side. LRR repeat units follow at residues 464-486 (NLKE…AFLE), 488-509 (NLKI…VFHL), 511-532 (NLKE…MQLE), 539-559 (NLRT…VTDL), 562-582 (SLQK…NNLK), 586-607 (NLKS…IFSL), 609-630 (NLHE…ISFQ), 634-655 (NLSC…IGAL), 657-678 (NLEQ…LFLC), 680-701 (KLHY…IQYL), 703-724 (NLQY…LFQC), 726-747 (KLQC…VGEL), and 749-771 (NLTH…EGCQ).

It belongs to the LRRC8 family. As to quaternary structure, heterohexamer; oligomerizes with other LRRC8 proteins (LRRC8A, LRRC8C, LRRC8D and/or LRRC8E) to form a heterohexamer. In vivo, the subunit composition may depend primarily on expression levels, and heterooligomeric channels containing various proportions of the different LRRC8 proteins may coexist.

Its subcellular location is the cell membrane. It is found in the endoplasmic reticulum membrane. It catalyses the reaction chloride(in) = chloride(out). It carries out the reaction iodide(out) = iodide(in). The catalysed reaction is taurine(out) = taurine(in). Non-essential component of the volume-regulated anion channel (VRAC, also named VSOAC channel), an anion channel required to maintain a constant cell volume in response to extracellular or intracellular osmotic changes. The VRAC channel conducts iodide better than chloride and can also conduct organic osmolytes like taurine. Channel activity requires LRRC8A plus at least one other family member (LRRC8B, LRRC8C, LRRC8D or LRRC8E); channel characteristics depend on the precise subunit composition. The protein is Volume-regulated anion channel subunit LRRC8B of Homo sapiens (Human).